The primary structure comprises 454 residues: Chromosomal replication initiator protein DnaA (454 aa).

Positions 1–79 (MSLCLWKQCL…NSPLIKFEIY (79 aa)) are domain I, interacts with DnaA modulators. A domain II region spans residues 79–117 (YQIYKENKLKKNIENNNNNKNEKLIWSNIPKFKNLSYRS). Residues 118–334 (NINKRYNFQN…GALNRVILNS (217 aa)) form a domain III, AAA+ region region. ATP is bound by residues Gly162, Gly164, Lys165, and Thr166. Positions 335-454 (RFTHRAITVD…FLNLIRTLSK (120 aa)) are domain IV, binds dsDNA.

It belongs to the DnaA family. As to quaternary structure, oligomerizes as a right-handed, spiral filament on DNA at oriC.

The protein localises to the cytoplasm. Its function is as follows. Plays an essential role in the initiation and regulation of chromosomal replication. ATP-DnaA binds to the origin of replication (oriC) to initiate formation of the DNA replication initiation complex once per cell cycle. Binds the DnaA box (a 9 base pair repeat at the origin) and separates the double-stranded (ds)DNA. Forms a right-handed helical filament on oriC DNA; dsDNA binds to the exterior of the filament while single-stranded (ss)DNA is stabiized in the filament's interior. The ATP-DnaA-oriC complex binds and stabilizes one strand of the AT-rich DNA unwinding element (DUE), permitting loading of DNA polymerase. After initiation quickly degrades to an ADP-DnaA complex that is not apt for DNA replication. Binds acidic phospholipids. This is Chromosomal replication initiator protein DnaA from Buchnera aphidicola subsp. Acyrthosiphon pisum (strain 5A).